The sequence spans 313 residues: uncharacterized protein (313 aa).

The signal sequence occupies residues 1-24 (MKRRRRWRGWLLFLALCFCLLCEA). Residues N28, N43, N57, N77, N101, N102, N109, N149, N168, N215, N222, N251, N254, and N267 are each glycosylated (N-linked (GlcNAc...) asparagine; by host). The tract at residues 47 to 73 (ATTGTTTTSPNVTSTTSNTVTTPTTVS) is disordered. The segment covering 90-114 (STVSGTRNTRNNNTTTIGTNATSPS) has biased composition (low complexity). Residues 90 to 117 (STVSGTRNTRNNNTTTIGTNATSPSSSV) form a disordered region.

This sequence belongs to the HHV-5 US34A protein family.

This is an uncharacterized protein from Homo sapiens (Human).